The sequence spans 245 residues: Ribosome maturation factor RimP (245 aa).

The protein belongs to the RimP family.

The protein resides in the cytoplasm. In terms of biological role, required for maturation of 30S ribosomal subunits. This Verminephrobacter eiseniae (strain EF01-2) protein is Ribosome maturation factor RimP.